The following is a 98-amino-acid chain: MALTKADLAETLFEKVGLSKRDAKETVEVFFEEIKQALESGEQVKLSGFGNFDLREKSERPGRNPKTGEDIPISARRVVTFKPGQKLKARVEDLPVEK.

A compositionally biased stretch (basic and acidic residues) spans Asp53–Glu69. The segment at Asp53–Ile73 is disordered.

It belongs to the bacterial histone-like protein family. Heterodimer of an alpha and a beta chain.

This protein is one of the two subunits of integration host factor, a specific DNA-binding protein that functions in genetic recombination as well as in transcriptional and translational control. The sequence is that of Integration host factor subunit alpha from Aliivibrio salmonicida (strain LFI1238) (Vibrio salmonicida (strain LFI1238)).